The sequence spans 119 residues: Ethylene-responsive proteinase inhibitor 1 (119 aa).

Positions 1-27 (MEANKSMVKLVAFLIILVSSCFQSLTA) are cleaved as a signal peptide. Positions 28–48 (QDLEIEVSDGLNVLQVHDVSQ) are excised as a propeptide.

Belongs to the protease inhibitor I13 (potato type I serine protease inhibitor) family.

The protein localises to the secreted. In Solanum lycopersicum (Tomato), this protein is Ethylene-responsive proteinase inhibitor 1.